The following is a 505-amino-acid chain: Probable ribonuclease FAU-1 (505 aa).

The segment at 389 to 408 is disordered; sequence ISGHGSGTYDELGTPRESGD.

The protein belongs to the FAU-1 family.

Functionally, probable RNase involved in rRNA stability through maturation and/or degradation of precursor rRNAs. Binds to RNA in loop regions with AU-rich sequences. The protein is Probable ribonuclease FAU-1 of Haloquadratum walsbyi (strain DSM 16790 / HBSQ001).